Here is a 188-residue protein sequence, read N- to C-terminus: Small ribosomal subunit protein bS16 (188 aa).

The segment at 155 to 188 (IAAASATEEAATEEVAEAAEEAPAAEENNETTEA) is disordered. Residues 164 to 188 (AATEEVAEAAEEAPAAEENNETTEA) show a composition bias toward acidic residues.

Belongs to the bacterial ribosomal protein bS16 family.

This chain is Small ribosomal subunit protein bS16, found in Flavobacterium johnsoniae (strain ATCC 17061 / DSM 2064 / JCM 8514 / BCRC 14874 / CCUG 350202 / NBRC 14942 / NCIMB 11054 / UW101) (Cytophaga johnsonae).